The chain runs to 370 residues: NSFL1 cofactor p47 (370 aa).

A disordered region spans residues 54 to 73 (SQATPSSVSRGTAPSDNRVT). Phosphoserine is present on residues serine 74, serine 102, and serine 114. Disordered stretches follow at residues 80 to 116 (HDQDEDEEEEEGQRFYAGGSERSGQQIVGPPRKRSPN) and 137 to 157 (VTKSPGETSKPRPFAGGGYRL). A Nuclear localization signal motif is present at residues 109–115 (PPRKRSP). Serine 140 is modified (phosphoserine; by CDK1). Tyrosine 167 is modified (phosphotyrosine). Positions 172–175 (RRRH) match the Nuclear localization signal motif. Phosphoserine is present on residues serine 176, serine 192, and serine 272. Residues 179–244 (DVHVVLKLWK…MEDHRDEDFV (66 aa)) enclose the SEP domain. A disordered region spans residues 272–292 (SPAQQAENEAKASSSISIDES). The 78-residue stretch at 291-368 (ESQPTTNIQI…NLLNAVIVQR (78 aa)) folds into the UBX domain.

In terms of assembly, part of a ternary complex containing STX5A, NSFL1C and VCP. NSFL1C forms a homotrimer that binds to one end of a VCP homohexamer. The complex binds to membranes enriched in phosphatidylethanolamine-containing lipids and promotes Golgi membrane fusion. Interaction with VCIP135 leads to dissociation of the complex via ATP hydrolysis by VCP. Binds ubiquitin and mono-ubiquitinated proteins via its N-terminal UBA-like domain when bound to VCP. Post-translationally, phosphorylated during mitosis. Phosphorylation inhibits interaction with Golgi membranes and is required for the fragmentation of the Golgi stacks during mitosis.

The protein localises to the nucleus. Its subcellular location is the golgi apparatus. It is found in the golgi stack. The protein resides in the chromosome. It localises to the cytoplasm. The protein localises to the cytoskeleton. Its subcellular location is the microtubule organizing center. It is found in the centrosome. Reduces the ATPase activity of VCP. Necessary for the fragmentation of Golgi stacks during mitosis and for VCP-mediated reassembly of Golgi stacks after mitosis. May play a role in VCP-mediated formation of transitional endoplasmic reticulum (tER). Inhibits the activity of CTSL (in vitro). Together with UBXN2B/p37, regulates the centrosomal levels of kinase AURKA/Aurora A during mitotic progression by promoting AURKA removal from centrosomes in prophase. Also, regulates spindle orientation during mitosis. The polypeptide is NSFL1 cofactor p47 (NSFL1C) (Bos taurus (Bovine)).